A 426-amino-acid polypeptide reads, in one-letter code: Serine--tRNA ligase (426 aa).

233–235 (TSE) serves as a coordination point for L-serine. 264–266 (RAE) is a binding site for ATP. Glu287 is a binding site for L-serine. An ATP-binding site is contributed by 351–354 (EISS). An L-serine-binding site is contributed by Ser387.

This sequence belongs to the class-II aminoacyl-tRNA synthetase family. Type-1 seryl-tRNA synthetase subfamily. In terms of assembly, homodimer. The tRNA molecule binds across the dimer.

It localises to the cytoplasm. It catalyses the reaction tRNA(Ser) + L-serine + ATP = L-seryl-tRNA(Ser) + AMP + diphosphate + H(+). The enzyme catalyses tRNA(Sec) + L-serine + ATP = L-seryl-tRNA(Sec) + AMP + diphosphate + H(+). Its pathway is aminoacyl-tRNA biosynthesis; selenocysteinyl-tRNA(Sec) biosynthesis; L-seryl-tRNA(Sec) from L-serine and tRNA(Sec): step 1/1. In terms of biological role, catalyzes the attachment of serine to tRNA(Ser). Is also able to aminoacylate tRNA(Sec) with serine, to form the misacylated tRNA L-seryl-tRNA(Sec), which will be further converted into selenocysteinyl-tRNA(Sec). The protein is Serine--tRNA ligase of Xanthomonas campestris pv. campestris (strain 8004).